The following is a 373-amino-acid chain: D-alanine--D-alanine ligase A (373 aa).

In terms of domain architecture, ATP-grasp spans 146–355; that stretch reads KRLAEFAGIP…YGELLSRLVD (210 aa). Residue 179 to 234 coordinates ATP; it reads VEGLSLPVFVKPCNMGSSVGIHKVKTQDALEAALDDAFRYDVKVLVQQGIDAREIE. Residues D308, E322, and N324 each contribute to the Mg(2+) site.

It belongs to the D-alanine--D-alanine ligase family. Requires Mg(2+) as cofactor. Mn(2+) serves as cofactor.

The protein resides in the cytoplasm. The catalysed reaction is 2 D-alanine + ATP = D-alanyl-D-alanine + ADP + phosphate + H(+). It participates in cell wall biogenesis; peptidoglycan biosynthesis. In terms of biological role, cell wall formation. In Bradyrhizobium diazoefficiens (strain JCM 10833 / BCRC 13528 / IAM 13628 / NBRC 14792 / USDA 110), this protein is D-alanine--D-alanine ligase A.